A 952-amino-acid chain; its full sequence is UPF0182 protein SRU_2225 (952 aa).

7 helical membrane-spanning segments follow: residues 12-32 (ILLGIIGVVFTVLLVTPGLVV), 52-72 (AQVLLFVLVFLVAGLYFGGNF), 109-129 (LGYVVAGVLSLLFAAGFSGRW), 168-188 (AVVGLAFLGLLALVTGYVIAG), 207-227 (LGANLIFLLLGWAWGFYLDLY), 247-267 (VVIPALYVMVAATLVLAGLVG), and 277-297 (LLGIGGAGYLVLLVGGLVLAP). Positions 917–952 (VPLPDTTGTVPPPTSSDTTGTMTAPTGDVSEVTGGS) are disordered. Over residues 931–940 (SSDTTGTMTA) the composition is skewed to polar residues.

It belongs to the UPF0182 family.

It localises to the cell membrane. This Salinibacter ruber (strain DSM 13855 / M31) protein is UPF0182 protein SRU_2225.